Here is a 504-residue protein sequence, read N- to C-terminus: uncharacterized protein (504 aa).

Residues 36 to 60 are disordered; sequence TAFRMEKEQRLPSQNKPPRGRRRPD. The region spanning 125–309 is the Integrase catalytic domain; that stretch reads QTHEPGRLGL…RPHLQVLPER (185 aa).

This is an uncharacterized protein from Sinorhizobium fredii (strain NBRC 101917 / NGR234).